Here is a 999-residue protein sequence, read N- to C-terminus: Sarcoplasmic/endoplasmic reticulum calcium ATPase 3 (999 aa).

Met-1 is modified (N-acetylmethionine). Over 1–48 the chain is Cytoplasmic; sequence MEEAHLLSAADVLRRFSVTAEGGLTLEQVTDARERYGPNELPTEEGKS. Phosphoserine is present on Ser-17. Position 19 is a phosphothreonine (Thr-19). Residues 49–69 traverse the membrane as a helical segment; the sequence is LWELVVEQFEDLLVRILLLAA. The Lumenal segment spans residues 70 to 89; it reads LVSFVLAWFEEGEETTTAFV. Residues 90–110 form a helical membrane-spanning segment; it reads EPLVIMLILVANAIVGVWQER. The Cytoplasmic portion of the chain corresponds to 111–253; that stretch reads NAESAIEALK…PERTPLQRKL (143 aa). A helical membrane pass occupies residues 254 to 273; sequence DEFGRQLSHAISVICVAVWV. The Lumenal portion of the chain corresponds to 274 to 295; that stretch reads INIGHFADPAHGGSWLRGAVYY. The helical transmembrane segment at 296 to 313 threads the bilayer; the sequence is FKIAVALAVAAIPEGLPA. Val-304, Ala-305, Ile-307, and Glu-309 together coordinate Ca(2+). Residues 314–757 are Cytoplasmic-facing; sequence VITTCLALGT…EEGRAIYNNM (444 aa). Asp-351 functions as the 4-aspartylphosphate intermediate in the catalytic mechanism. Mg(2+) is bound by residues Asp-351 and Thr-353. An ATP-binding site is contributed by Thr-353. The interaction with phospholamban 1 stretch occupies residues 370–400; it reads AEAEAGACRLHEFTISGTTYTPEGEVRQGEQ. Residue Thr-415 is modified to Phosphothreonine. Glu-442, Arg-489, Lys-515, Arg-560, Thr-625, Gly-626, and Asp-627 together coordinate ATP. Ser-662 is subject to Phosphoserine. ATP is bound by residues Arg-678 and Lys-684. Asp-703 is a Mg(2+) binding site. Asn-706 is an ATP binding site. The chain crosses the membrane as a helical span at residues 758-777; that stretch reads KQFIRYLISSNVGEVVCIFL. Ca(2+) contacts are provided by Asn-768 and Glu-771. The Lumenal portion of the chain corresponds to 778–787; sequence TAILGLPEAL. The chain crosses the membrane as a helical span at residues 788–808; sequence IPVQLLWVNLVTDGLPATALG. The segment at 788–808 is interaction with phospholamban 2; it reads IPVQLLWVNLVTDGLPATALG. Positions 796, 799, and 800 each coordinate Ca(2+). Topologically, residues 809-828 are cytoplasmic; that stretch reads FNPPDLDIMEKLPRNPREAL. A helical transmembrane segment spans residues 829–851; sequence ISGWLFFRYLAIGVYVGLATVAA. The Lumenal portion of the chain corresponds to 852–897; sequence ATWWFLYDAEGPQVTFHQLRNFLKCSEDNPLFAGIDCEVFESRFPT. The helical transmembrane segment at 898–917 threads the bilayer; the sequence is TMALSVLVTIEMCNALNSVS. Residue Glu-908 coordinates Ca(2+). Over 918-930 the chain is Cytoplasmic; that stretch reads ENQSLLRMPPWLN. A helical transmembrane segment spans residues 931–949; that stretch reads PWLLGAVVMSMALHFLILL. Residues 950–964 are Lumenal-facing; sequence VPPLPLIFQVTPLSG. A helical membrane pass occupies residues 965 to 985; it reads RQWGVVLQMSLPVILLDEALK. Topologically, residues 986–999 are cytoplasmic; the sequence is YLSRHHVDEKKDLK.

It belongs to the cation transport ATPase (P-type) (TC 3.A.3) family. Type IIA subfamily. As to quaternary structure, interacts with sarcolipin (SLN). Interacts with phospholamban (PLN). Interacts with myoregulin (MRLN). Interacts with DWORF. Interacts with VMP1. Interacts with TUNAR; the interaction occurs at low levels in low glucose conditions and is increased by high glucose levels. Requires Mg(2+) as cofactor. Found in most tissues. Most abundant in large and small intestine, spleen and lung. Also detected in PC12 cells.

It localises to the endoplasmic reticulum membrane. It is found in the sarcoplasmic reticulum membrane. It catalyses the reaction Ca(2+)(in) + ATP + H2O = Ca(2+)(out) + ADP + phosphate + H(+). Its activity is regulated as follows. Inhibited by sarcolipin (SLN), phospholamban (PLN) and myoregulin (MRLN). Enhanced by DWORF; DWORF increases activity by displacing sarcolipin (SLN), phospholamban (PLN) and myoregulin (MRLN). Functionally, this magnesium-dependent enzyme catalyzes the hydrolysis of ATP coupled with the transport of the calcium. Transports calcium ions from the cytosol into the sarcoplasmic/endoplasmic reticulum lumen. Contributes to calcium sequestration involved in muscular excitation/contraction. This magnesium-dependent enzyme catalyzes the hydrolysis of ATP coupled with the transport of calcium. Transports calcium ions from the cytosol into the sarcoplasmic/endoplasmic reticulum lumen. Contributes to calcium sequestration involved in muscular excitation/contraction. This is Sarcoplasmic/endoplasmic reticulum calcium ATPase 3 (Atp2a3) from Rattus norvegicus (Rat).